The primary structure comprises 391 residues: DNA repair protein NreB (391 aa).

Residues 3–17 (CIECRGRMLCSRKVC) form a C4-type zinc finger. Positions 384–391 (QRTLWEFM) match the PIP motif motif.

It belongs to the Nre family. As to quaternary structure, interacts with the DNA polymerase sliding clamp (PCNA) via the PIP (PCNA-interacting peptide) motif.

In terms of biological role, involved in DNA damage repair. This is DNA repair protein NreB from Archaeoglobus fulgidus (strain ATCC 49558 / DSM 4304 / JCM 9628 / NBRC 100126 / VC-16).